The following is a 391-amino-acid chain: MTNNTKTITLNLGPQHPATHGVLRLILEMDGEVVNNADPHIGLLHRGTEKLIEHKTYLQAIPYFDRLDYVSPMCQEHAFALAVESLLECKVPRRAQFIRVLFSELTRILNHTLNIGSQALDIGATTPLLWLFEEREKIMEFYEHVSGSRMHSNYFRPGGVVADLPEGLLEDIDKFIEQFPPKLHDIESLLNENRLWKQRLVDIGVVSQKEAMDWGFSGPMLRGSGIAWDLRKSNPYDVYDEMDFKVPIGKNGDCYDRYFVRMLEMYESIKIIKQCIEKMPKGAIKTDDPKLTPPTRAKMKESMEAMIHHFKLYTEGYDVPAGETYKAVEAPKGEFGVYLYSRGGNRPYRCRIKAPGFAHLQGLDFMSQGHLMADVITIIATLDIVFGEIDR.

This sequence belongs to the complex I 49 kDa subunit family. In terms of assembly, NDH-1 is composed of 14 different subunits. Subunits NuoB, C, D, E, F, and G constitute the peripheral sector of the complex.

The protein resides in the cell inner membrane. It carries out the reaction a quinone + NADH + 5 H(+)(in) = a quinol + NAD(+) + 4 H(+)(out). NDH-1 shuttles electrons from NADH, via FMN and iron-sulfur (Fe-S) centers, to quinones in the respiratory chain. The immediate electron acceptor for the enzyme in this species is believed to be ubiquinone. Couples the redox reaction to proton translocation (for every two electrons transferred, four hydrogen ions are translocated across the cytoplasmic membrane), and thus conserves the redox energy in a proton gradient. This is NADH-quinone oxidoreductase subunit D from Rickettsia rickettsii (strain Sheila Smith).